The sequence spans 508 residues: N-acetyl-D-hexosamine oxidase (508 aa).

Residues 26 to 203 enclose the FAD-binding PCMH-type domain; sequence TDAQAAGRIA…TAYTFARLPE (178 aa). Residues 64 to 123 constitute a cross-link (6-(S-cysteinyl)-8alpha-(pros-histidyl)-FAD (His-Cys)); it reads HCYEDFVSNNPDGAIVDLSLLNAPEVRADGTVRIPAGTQNWNGYLELYKRHNLTLPGGSC.

Belongs to the oxygen-dependent FAD-linked oxidoreductase family. The cofactor is FAD.

It carries out the reaction N-acetyl-D-glucosamine + O2 + H2O = N-acetyl-D-glucosaminate + H2O2 + H(+). The enzyme catalyses N-acetyl-D-galactosamine + O2 + H2O = N-acetyl-D-galactosaminate + H2O2 + H(+). It catalyses the reaction N-acetyl-D-glucosamine + O2 = N-acetyl-D-glucosamino-1,5-lactone + H2O2. The catalysed reaction is N-acetyl-D-galactosamine + O2 = N-acetyl-D-galactosamino-1,5-lactone + H2O2. In terms of biological role, catalyzes the oxidation of a range of monosaccharides in vitro, displaying the highest activity with N-acetylglucosamine (GlcNAc) and N-acetylgalactosamine (GalNAc), with a reduction of O2 to H2O2. Acts upon the C1 carbon of the GlcNAc or GalNAc molecule, producing the corresponding lactone, which can spontaneously hydrolyze. Its biological function is unclear, but its main function might be connected to extracellular production of hydrogen peroxide to compete with other organisms through oxidative stress, or support the action of peroxidases and peroxygenases. In Ralstonia solanacearum (strain UW551), this protein is N-acetyl-D-hexosamine oxidase.